The sequence spans 627 residues: UvrABC system protein C (627 aa).

The 80-residue stretch at 26–105 (PEPGVYFMRD…IKQHQPYFNV (80 aa)) folds into the GIY-YIG domain. The UVR domain occupies 215–250 (QELIDILSEQMEKAAEALNFEVAARIRDQIAGLKSL).

This sequence belongs to the UvrC family. As to quaternary structure, interacts with UvrB in an incision complex.

The protein resides in the cytoplasm. In terms of biological role, the UvrABC repair system catalyzes the recognition and processing of DNA lesions. UvrC both incises the 5' and 3' sides of the lesion. The N-terminal half is responsible for the 3' incision and the C-terminal half is responsible for the 5' incision. In Nostoc sp. (strain PCC 7120 / SAG 25.82 / UTEX 2576), this protein is UvrABC system protein C.